A 188-amino-acid polypeptide reads, in one-letter code: MTEYKLVVVGAGGVGKSALTIQLIQNHFVDEYDPTIEDSYRKQVVIDGETCLLDILDTAGQEEYSAMRDQYMRTGEGFLCVFAINNTKSFEDIHHYREQIKRVKDSEDVPMVLVGNKCDLPSRTVDTKQAQDLARSYGIPFIETSAKTRQGGDDAFYTLVREIRKHKEKMSKDGKKKKKKSKTKCIIM.

An N-acetylmethionine modification is found at M1. T2 bears the N-acetylthreonine; in GTPase KRas, N-terminally processed mark. Residues 10–18, 29–35, and 59–60 contribute to the GTP site; these read GAGGVGKSA, VDEYDPT, and AG. The short motif at 32–40 is the Effector region element; sequence YDPTIEDSY. Position 104 is an N6-acetyllysine (K104). GTP is bound at residue 116 to 119; it reads NKCD. Residues 166–185 form a hypervariable region region; it reads HKEKMSKDGKKKKKKSKTKC. A disordered region spans residues 167 to 188; sequence KEKMSKDGKKKKKKSKTKCIIM. C185 carries the post-translational modification Cysteine methyl ester. A lipid anchor (S-farnesyl cysteine) is attached at C185. Positions 186–188 are cleaved as a propeptide — removed in mature form; it reads IIM.

Belongs to the small GTPase superfamily. Ras family. Interacts with PHLPP. Interacts (active GTP-bound form preferentially) with RGS14. Interacts (when farnesylated) with PDE6D; this promotes dissociation from the cell membrane. Interacts with SOS1. Interacts (when farnesylated) with GPR31. Interacts with RAP1GDS1. Interacts (active GTP-bound form) with both SHOC2 and PP1c (all isoforms) to form a tertiary complex; SHOC2 and PP1c preferably bind M-Ras/MRAS, but they also bind K-Ras/KRAS, N-Ras/NRAS and H-Ras/HRAS. Interacts (GTP-bound form) with MAPKAP1/SIN1; inhibiting K-Ras/KRAS activity. Acetylation at Lys-104 prevents interaction with guanine nucleotide exchange factors (GEFs).

Its subcellular location is the cell membrane. It localises to the cytoplasm. The protein localises to the cytosol. The enzyme catalyses GTP + H2O = GDP + phosphate + H(+). Its activity is regulated as follows. Alternates between an inactive form bound to GDP and an active form bound to GTP. Activated by a guanine nucleotide-exchange factor (GEF) and inactivated by a GTPase-activating protein (GAP). Interaction with SOS1 promotes exchange of bound GDP to GTP. Its function is as follows. Ras proteins bind GDP/GTP and possess intrinsic GTPase activity. Plays an important role in the regulation of cell proliferation. Plays a role in promoting oncogenic events by inducing transcriptional silencing of tumor suppressor genes (TSGs) in colorectal cancer (CRC) cells in a ZNF304-dependent manner. In Monodelphis domestica (Gray short-tailed opossum), this protein is GTPase KRas (KRAS).